Reading from the N-terminus, the 97-residue chain is uncharacterized protein (97 aa).

A run of 3 helical transmembrane segments spans residues 5–25, 49–71, and 75–92; these read INYL…FVGI, IAGY…SFQG, and LIPP…IYVN.

It localises to the cell membrane. This is an uncharacterized protein from Bacillus subtilis (strain 168).